Consider the following 154-residue polypeptide: Protein X (154 aa).

Residues 68 to 117 (PCALRFTSARCMETTVNAHQILPKVLHKRTLGLPAMSTTDLEAYFKDSVF) form a mitochondrial targeting sequence region.

Belongs to the orthohepadnavirus protein X family. As to quaternary structure, may form homodimer. May interact with host CEBPA, CFLAR, CREB1, DDB1, E4F1, HBXIP, HSPD1/HSP60, NFKBIA, POLR2E and SMAD4. Interacts with host SMC5-SMC6 complex and induces its degradation. Interacts with host TRPC4AP; leading to prevent ubiquitination of TRPC4AP. Interacts with host PLSCR1; this interaction promotes ubiquitination and degradation of HBx and impairs HBx-mediated cell proliferation. In terms of processing, a fraction may be phosphorylated in insect cells and HepG2 cells, a human hepatoblastoma cell line. Phosphorylated in vitro by host protein kinase C or mitogen-activated protein kinase. N-acetylated in insect cells.

The protein resides in the host cytoplasm. It localises to the host nucleus. It is found in the host mitochondrion. In terms of biological role, multifunctional protein that plays a role in silencing host antiviral defenses and promoting viral transcription. Does not seem to be essential for HBV infection. May be directly involved in development of cirrhosis and liver cancer (hepatocellular carcinoma). Most of cytosolic activities involve modulation of cytosolic calcium. The effect on apoptosis is controversial depending on the cell types in which the studies have been conducted. May induce apoptosis by localizing in mitochondria and causing loss of mitochondrial membrane potential. May also modulate apoptosis by binding host CFLAR, a key regulator of the death-inducing signaling complex (DISC). Promotes viral transcription by using the host E3 ubiquitin ligase DDB1 to target the SMC5-SMC6 complex to proteasomal degradation. This host complex would otherwise bind to viral episomal DNA, and prevents its transcription. Moderately stimulates transcription of many different viral and cellular transcription elements. Promoters and enhancers stimulated by HBx contain DNA binding sites for NF-kappa-B, AP-1, AP-2, c-EBP, ATF/CREB, or the calcium-activated factor NF-AT. This is Protein X from Homo sapiens (Human).